The following is a 177-amino-acid chain: Small ribosomal subunit protein uS4 (177 aa).

Positions 104-168 (RRLQTLVFRK…SPMASESHPE (65 aa)) constitute an S4 RNA-binding domain. Residues 157 to 177 (PNSPMASESHPERTDSVKDAE) are disordered. The span at 165 to 177 (SHPERTDSVKDAE) shows a compositional bias: basic and acidic residues.

The protein belongs to the universal ribosomal protein uS4 family. In terms of assembly, part of the 30S ribosomal subunit. Contacts protein S5. The interaction surface between S4 and S5 is involved in control of translational fidelity.

Functionally, one of the primary rRNA binding proteins, it binds directly to 16S rRNA where it nucleates assembly of the body of the 30S subunit. With S5 and S12 plays an important role in translational accuracy. The chain is Small ribosomal subunit protein uS4 from Methanococcus aeolicus (strain ATCC BAA-1280 / DSM 17508 / OCM 812 / Nankai-3).